A 328-amino-acid chain; its full sequence is Glucan endo-1,3-beta-glucosidase, basic isoform 3 (328 aa).

The Proton donor role is filled by Glu85. Glu230 serves as the catalytic Nucleophile. Positions 306–328 (VSERVWDISAETNSTTSSLISEM) are cleaved as a propeptide — removed in mature form. N-linked (GlcNAc...) asparagine glycosylation is present at Asn318.

Belongs to the glycosyl hydrolase 17 family.

It localises to the vacuole. It catalyses the reaction Hydrolysis of (1-&gt;3)-beta-D-glucosidic linkages in (1-&gt;3)-beta-D-glucans.. Its function is as follows. Is thought to be an important plant defense-related product against fungal pathogens. This is Glucan endo-1,3-beta-glucosidase, basic isoform 3 (GLUB3) from Solanum tuberosum (Potato).